We begin with the raw amino-acid sequence, 314 residues long: Ribosomal RNA small subunit methyltransferase H (314 aa).

S-adenosyl-L-methionine contacts are provided by residues 36–38 (GGH), Asp-56, Phe-81, Asp-103, and Gln-110.

This sequence belongs to the methyltransferase superfamily. RsmH family.

The protein localises to the cytoplasm. The enzyme catalyses cytidine(1402) in 16S rRNA + S-adenosyl-L-methionine = N(4)-methylcytidine(1402) in 16S rRNA + S-adenosyl-L-homocysteine + H(+). Its function is as follows. Specifically methylates the N4 position of cytidine in position 1402 (C1402) of 16S rRNA. This chain is Ribosomal RNA small subunit methyltransferase H, found in Shewanella sediminis (strain HAW-EB3).